A 1703-amino-acid polypeptide reads, in one-letter code: MAKSKLPRSTPAARAAAVPPPRLAAAAQQQHHQQQPPSTPPAPVPPTKPSVAGASTPPRSASPVSNHDTDSVALSSAKKKKKKSKSKAKDADFIDDQEYELQQAAALAQRPRSPASLAARAQAQAQLLAAASELYRRIEGDAQGIPDDDAYWTSLPAHLRTFIRNALPLGQFPPAAQAALNENANDPANRHASTQAMIAVAQQLAQAAHASQRHIQQYPPGTHPYPPLPFDASIFADLALHPDQPLPLHPHPNTANNAHPTNVNGAYGQYSSSPNPPPTQPPVEPLPPPVVLYDNFDDEIDRFDDDGVDDAHYYDDAELDEDDEVLEADAGLLRARNRVWMQEGANHALRPNGLATHPDGMRSASKNKKKKKKKKGGAGAAAGHGDDEAHEIELEVPPPKPVPNHPPPSTNVSSVARNSNPPPPSSRAAGKQPMTFNSTGKTPARPANGLPPSSNSGKRSVSSSTHGHPPAANASANNAKIWSTSSAEERERIKEFWLGLSMKDRQKLVQVEKETVLRKMKEQQKFLCSCAVCGRKRSAIEEELEVLYDAYYDELEEYANHQQRWVSSGGTIPPPPGPGPFPGSVALDASGAVIGGDPLSRTRAAHAGRDTRHTHTHTHAHTHTHTHTHTHTHTHAHQHPHPHPHGRKASLHPESSDGYDDDELDDDAEYDDDDDDADYDDEDEDDDVELEKERAREDYDKRNPVPSARRRGTNDSNDLFGLGSSLTVKGGILTVADDMLKNDGRKFLEMMEQLAERRMHREELTNAELAASDDEDDVDGPDDVDDEDLDEEDEDEEDEILTEEQRMEEGRKMFQIFAARMFEQRVLAAYRERVAQERQLQLLRELEEEDDNEKAREARRMKESQKKKDKKKAQREAKEAERLKKDQERAAAEAEVRAQQQAQRDAELKKQEEIRLKKEAERKAREDEKAKKDEERRRRQAEERERQLEVERKRREKEEKIRLERELQEKAKRDREEAQRKAKEEQQRVQRAKELKAKEEQERKAEAAQKEKEARAQAQREAKQAAAAASRGASAAQGVPSSPSTGPKAGSNKAANASTPGTPARGGKNGSVTGPPTVGLGQDQVQPRGVHSQRSAASSKHAPGTGGPNAAGGLAAAVAASSVAPAGSSSNAVGSTLPAPPQGLPPRPSTAVLTPAGSSSQTSSVSVAANAGLPRPPTNLAGGGSSSAVPPSLGFGSIALNAQSNVPMPSAKTPGSSISPKPAQSFVQPQEKQPSPPGFGAAQSPMGAVYGQHAGLDSLRSPTLSNGLQNSGMFGSNGSMSSSLQSPSLGAPGMGGMTNSLASLNLNAAPLSSPALNVGNPLISSKTPGLGMESSTPTGHNLGHMHSPTQTPFSPMSGSGSVDPMRSRTASFADSDPMSFAGIRPGSSLSQRVPTYRSGAPTPIGPIGRPKAMDAIQQHMHDEHTGAIGNGRSSSTTSGSGATSPRLPEGILGSSALGGDDDIIDPKPRRVSHTIPIGGGATGSSMGSAGSFFGGGMGGGSAVGGGFGVGSSSPWSSFSGNNPTAPGPLSPAFNGGGAAPGSIGSGLATGNFGLNQNASTPGAGSSGSGMAGGAASDPWARMSTNSWDRARFAFEQPGGNGVGAGSNGGTPSGLGGIGGSHHAHAPGSHMGHLHHQLGLSAGPGNGNGSGSGGMLGSFALGAPGSGTRNLFGAPGSNALHPGAIGSALSPTLPGARHVSGSHE.

12 disordered regions span residues 1–91 (MAKS…AKDA), 243–288 (DQPL…PLPP), 347–484 (HALR…IWST), 566–724 (VSSG…GLGS), 759–807 (MHRE…EQRM), 843–1292 (LREL…LGAP), 1353–1407 (FSPM…IGPI), 1424–1465 (HTGA…DIID), 1516–1537 (SSFSGNNPTAPGPLSPAFNGGG), 1558–1581 (ASTPGAGSSGSGMAGGAASDPWAR), 1595–1637 (EQPG…HHQL), and 1672–1703 (GAPGSNALHPGAIGSALSPTLPGARHVSGSHE). The segment covering 7 to 36 (PRSTPAARAAAVPPPRLAAAAQQQHHQQQP) has biased composition (low complexity). The span at 37–48 (PSTPPAPVPPTK) shows a compositional bias: pro residues. A compositionally biased stretch (polar residues) spans 57–66 (PPRSASPVSN). Over residues 77 to 86 (AKKKKKKSKS) the composition is skewed to basic residues. Residues 253–273 (NTANNAHPTNVNGAYGQYSSS) show a composition bias toward polar residues. The span at 274–288 (PNPPPTQPPVEPLPP) shows a compositional bias: pro residues. The segment covering 365–376 (SKNKKKKKKKKG) has biased composition (basic residues). A compositionally biased stretch (basic and acidic residues) spans 384–393 (HGDDEAHEIE). Positions 396–409 (VPPPKPVPNHPPPS) are enriched in pro residues. Composition is skewed to low complexity over residues 410 to 419 (TNVSSVARNS) and 453 to 464 (SSNSGKRSVSSS). A compositionally biased stretch (pro residues) spans 572–581 (IPPPPGPGPF). The segment covering 614 to 650 (THTHTHAHTHTHTHTHTHTHTHAHQHPHPHPHGRKAS) has biased composition (basic residues). The span at 657 to 690 (DGYDDDELDDDAEYDDDDDDADYDDEDEDDDVEL) shows a compositional bias: acidic residues. A compositionally biased stretch (basic and acidic residues) spans 691–703 (EKERAREDYDKRN). A coiled-coil region spans residues 748-1031 (LEMMEQLAER…AKQAAAAASR (284 aa)). Residues 771–802 (ASDDEDDVDGPDDVDDEDLDEEDEDEEDEILT) are compositionally biased toward acidic residues. 3 stretches are compositionally biased toward basic and acidic residues: residues 853–866 (EKAREARRMKESQK), 874–896 (QREAKEAERLKKDQERAAAEAEV), and 904–1023 (RDAE…REAK). Low complexity-rich tracts occupy residues 1024-1037 (QAAAAASRGASAAQ) and 1111-1135 (AGGLAAAVAASSVAPAGSSSNAVGS). Residues 1138–1148 (PAPPQGLPPRP) are compositionally biased toward pro residues. The span at 1158 to 1167 (SSSQTSSVSV) shows a compositional bias: low complexity. Positions 1200-1219 (LNAQSNVPMPSAKTPGSSIS) are enriched in polar residues. The segment covering 1269–1291 (QNSGMFGSNGSMSSSLQSPSLGA) has biased composition (low complexity). Residues 1431 to 1444 (GRSSSTTSGSGATS) are compositionally biased toward low complexity. A compositionally biased stretch (gly residues) spans 1598-1619 (GGNGVGAGSNGGTPSGLGGIGG).

Belongs to the NST1 family.

Its subcellular location is the cytoplasm. Functionally, may act as a negative regulator of salt tolerance. The chain is Stress response protein NST1 (NST1) from Mycosarcoma maydis (Corn smut fungus).